The chain runs to 265 residues: Silaffin-1 (265 aa).

An N-terminal signal peptide occupies residues 1–19; sequence MKLTAIFPLLFTAVGYCAA. A propeptide spans 20–107 (acidic); it reads QSIADLAAAN…DSEEEELRIL (88 aa). The disordered stretch occupies residues 37-106; the sequence is SAQLISADSS…EDSEEEELRI (70 aa). Residues 51-90 show a composition bias toward low complexity; that stretch reads DSSVESVDAASSDVSGSSVESVDVSGSSLESVDVSGSSLE. Residues 91–103 are compositionally biased toward acidic residues; that stretch reads SVDDSSEDSEEEE. The stretch at 108–140 is one R1; atypical repeat; it reads SSKKSGSYYSYGTKKSGSYSGYSTKKSASRRIL. The tract at residues 108–257 is 7 X 19 AA repeat of S-S-K-K-S-G-S-Y-S-G-S-K-G-S-K-R-R-[IL]-L; that stretch reads SSKKSGSYYS…GSKGSKRRIL (150 aa). At lysine 110 the chain carries N6-poly(methylaminopropyl)lysine. Residue lysine 111 is modified to N6,N6-dimethyllysine. Residues 122–133 show a composition bias toward low complexity; that stretch reads KSGSYSGYSTKK. Positions 122–265 are disordered; that stretch reads KSGSYSGYST…ILSGGLRGSM (144 aa). The propeptide occupies 137–140; that stretch reads RRIL. An R2; atypical repeat occupies 141–162; the sequence is SSKKSGSYSGYSTKKSGSRRIL. The segment covering 142-155 has biased composition (low complexity); sequence SKKSGSYSGYSTKK. The residue at position 143 (lysine 143) is an N6-poly(methylaminopropyl)lysine. At lysine 144 the chain carries N6,N6-dimethyllysine. Lysine 154 is subject to N6-poly(methylaminopropyl)lysine. Position 155 is an N6,N6-dimethyllysine (lysine 155). Residues 159–162 constitute a propeptide that is removed on maturation; it reads RRIL. A phosphoserine mark is found at serine 163 and serine 164. Residues 163–181 form an R3 repeat; that stretch reads SSKKSGSYSGSKGSKRRIL. Over residues 164-174 the composition is skewed to low complexity; sequence SKKSGSYSGSK. Position 165 is an N6-poly(methylaminopropyl)lysine (lysine 165). The residue at position 166 (lysine 166) is an N6,N6-dimethyllysine. A phosphoserine mark is found at serine 167, serine 169, serine 171, and serine 173. At lysine 174 the chain carries N6,N6,N6-trimethyl-5-hydroxylysine. Phosphoserine is present on serine 176. Lysine 177 carries the post-translational modification N6-poly(methylaminopropyl)lysine. Residues 178–181 constitute a propeptide that is removed on maturation; that stretch reads RRIL. Phosphoserine is present on residues serine 182 and serine 183. One copy of the R4 repeat lies at 182 to 200; it reads SSKKSGSYSGSKGSKRRNL. Residues 183-193 are compositionally biased toward low complexity; sequence SKKSGSYSGSK. Lysine 184 bears the N6-poly(methylaminopropyl)lysine mark. The residue at position 185 (lysine 185) is an N6,N6-dimethyllysine. Phosphoserine is present on residues serine 186, serine 188, serine 190, and serine 192. Lysine 193 is modified (N6,N6,N6-trimethyl-5-hydroxylysine). Position 195 is a phosphoserine (serine 195). Lysine 196 carries the post-translational modification N6-poly(methylaminopropyl)lysine. Positions 197–200 are excised as a propeptide; it reads RRNL. Residues serine 201 and serine 202 each carry the phosphoserine modification. The R5 repeat unit spans residues 201-219; that stretch reads SSKKSGSYSGSKGSKRRIL. Low complexity predominate over residues 202-212; the sequence is SKKSGSYSGSK. Lysine 203 is subject to N6-poly(methylaminopropyl)lysine. Lysine 204 is subject to N6,N6-dimethyllysine. A phosphoserine mark is found at serine 205, serine 207, serine 209, and serine 211. Lysine 212 is modified (N6,N6,N6-trimethyl-5-hydroxylysine). Serine 214 bears the Phosphoserine mark. An N6-poly(methylaminopropyl)lysine modification is found at lysine 215. Residues 216-219 constitute a propeptide that is removed on maturation; that stretch reads RRIL. 2 positions are modified to phosphoserine: serine 220 and serine 221. The R6 repeat unit spans residues 220-238; the sequence is SSKKSGSYSGSKGSKRRNL. Positions 221-231 are enriched in low complexity; sequence SKKSGSYSGSK. N6-poly(methylaminopropyl)lysine is present on lysine 222. Lysine 223 is modified (N6,N6-dimethyllysine). Residues serine 224, serine 226, serine 228, and serine 230 each carry the phosphoserine modification. Lysine 231 is modified (N6,N6,N6-trimethyl-5-hydroxylysine). Serine 233 is subject to Phosphoserine. Lysine 234 bears the N6-poly(methylaminopropyl)lysine mark. Residues 235-238 constitute a propeptide that is removed on maturation; it reads RRNL. A phosphoserine mark is found at serine 239 and serine 240. One copy of the R7 repeat lies at 239 to 257; that stretch reads SSKKSGSYSGSKGSKRRIL. The segment covering 240 to 250 has biased composition (low complexity); it reads SKKSGSYSGSK. N6-poly(methylaminopropyl)lysine is present on lysine 241. Lysine 242 carries the N6,N6-dimethyllysine modification. 4 positions are modified to phosphoserine: serine 243, serine 245, serine 247, and serine 249. Position 250 is an N6,N6,N6-trimethyl-5-hydroxylysine (lysine 250). At serine 252 the chain carries Phosphoserine. Position 253 is an N6-poly(methylaminopropyl)lysine (lysine 253). Positions 254-265 are excised as a propeptide; sequence RRILSGGLRGSM.

Silaffin-1A peptides form large aggregates via electrostatic interactions due to intermolecular interactions between the negatively charged phosphate groups and the polyamine moieties. N6-polymethylaminopropylated. Two lysine residues of each peptide bears 6 to 11 repeats of methyl-propylamine, which gives a possible template for nucleation, and may also control the silica colloid size within the silica deposition vesicle (SDV). In terms of processing, phosphorylated. All serine residues of the Silaffin-1A1 peptide are phosphorylated. Only minor amounts of the Silaffin-1A2 peptide are phosphorylated. Phosphorylation is essential for the activity. It may represent a source of anions required for silica formation of diatoms.

Its function is as follows. Catalyzes the polymerization of silica spheres from a silicilic acid solution. It therefore plays a central role in the formation of silica cell wall of diatoms. This is Silaffin-1 (SIL1) from Cylindrotheca fusiformis (Marine diatom).